Reading from the N-terminus, the 353-residue chain is Photosystem II protein D1 (353 aa).

T2 carries the N-acetylthreonine modification. Residue T2 is modified to Phosphothreonine. The next 3 membrane-spanning stretches (helical) occupy residues 29–46 (YIGWFGVLMIPTLLTATS), 118–133 (HFLLGVACYMGREWEL), and 142–156 (WIAVAYSAPVAAATA). H118 lines the chlorophyll a pocket. Y126 contributes to the pheophytin a binding site. [CaMn4O5] cluster-binding residues include D170 and E189. A helical transmembrane segment spans residues 197–218 (FHMLGVAGVFGGSLFSAMHGSL). H198 lines the chlorophyll a pocket. A quinone-binding positions include H215 and 264-265 (SF). H215 lines the Fe cation pocket. H272 is a binding site for Fe cation. A helical transmembrane segment spans residues 274-288 (FLAAWPVVGIWFTAL). [CaMn4O5] cluster is bound by residues H332, E333, D342, and A344. A propeptide spanning residues 345–353 (AIEAPATNG) is cleaved from the precursor.

This sequence belongs to the reaction center PufL/M/PsbA/D family. PSII is composed of 1 copy each of membrane proteins PsbA, PsbB, PsbC, PsbD, PsbE, PsbF, PsbH, PsbI, PsbJ, PsbK, PsbL, PsbM, PsbT, PsbX, PsbY, PsbZ, Psb30/Ycf12, at least 3 peripheral proteins of the oxygen-evolving complex and a large number of cofactors. It forms dimeric complexes. The D1/D2 heterodimer binds P680, chlorophylls that are the primary electron donor of PSII, and subsequent electron acceptors. It shares a non-heme iron and each subunit binds pheophytin, quinone, additional chlorophylls, carotenoids and lipids. D1 provides most of the ligands for the Mn4-Ca-O5 cluster of the oxygen-evolving complex (OEC). There is also a Cl(-1) ion associated with D1 and D2, which is required for oxygen evolution. The PSII complex binds additional chlorophylls, carotenoids and specific lipids. serves as cofactor. Tyr-161 forms a radical intermediate that is referred to as redox-active TyrZ, YZ or Y-Z. Post-translationally, C-terminally processed by CTPA; processing is essential to allow assembly of the oxygen-evolving complex and thus photosynthetic growth.

The protein localises to the plastid membrane. It carries out the reaction 2 a plastoquinone + 4 hnu + 2 H2O = 2 a plastoquinol + O2. Functionally, photosystem II (PSII) is a light-driven water:plastoquinone oxidoreductase that uses light energy to abstract electrons from H(2)O, generating O(2) and a proton gradient subsequently used for ATP formation. It consists of a core antenna complex that captures photons, and an electron transfer chain that converts photonic excitation into a charge separation. The D1/D2 (PsbA/PsbD) reaction center heterodimer binds P680, the primary electron donor of PSII as well as several subsequent electron acceptors. The sequence is that of Photosystem II protein D1 from Cuscuta reflexa (Southern Asian dodder).